Reading from the N-terminus, the 445-residue chain is Chromosomal replication initiator protein DnaA (445 aa).

A domain I, interacts with DnaA modulators region spans residues 1-73 (MSPNSTLWQT…NELATKYSST (73 aa)). The segment at 73-102 (TPVRLKFVSQEEVIEEPVADRKLTIDYRQG) is domain II. Residues 103–323 (NLNSTYTFDS…GALIRLISYA (221 aa)) form a domain III, AAA+ region region. 4 residues coordinate ATP: G147, G149, K150, and T151. Residues 324–445 (QTFNLEITMN…KFAVDSIVKK (122 aa)) form a domain IV, binds dsDNA region.

The protein belongs to the DnaA family. As to quaternary structure, oligomerizes as a right-handed, spiral filament on DNA at oriC.

The protein resides in the cytoplasm. Its function is as follows. Plays an essential role in the initiation and regulation of chromosomal replication. ATP-DnaA binds to the origin of replication (oriC) to initiate formation of the DNA replication initiation complex once per cell cycle. Binds the DnaA box (a 9 base pair repeat at the origin) and separates the double-stranded (ds)DNA. Forms a right-handed helical filament on oriC DNA; dsDNA binds to the exterior of the filament while single-stranded (ss)DNA is stabiized in the filament's interior. The ATP-DnaA-oriC complex binds and stabilizes one strand of the AT-rich DNA unwinding element (DUE), permitting loading of DNA polymerase. After initiation quickly degrades to an ADP-DnaA complex that is not apt for DNA replication. Binds acidic phospholipids. The polypeptide is Chromosomal replication initiator protein DnaA (Acholeplasma laidlawii).